The primary structure comprises 96 residues: Prokineticin Bm8-a (96 aa).

An N-terminal signal peptide occupies residues 1–19 (MKCFAQIVVLLLVIAFSHG). 5 disulfides stabilise this stretch: Cys-26–Cys-38, Cys-32–Cys-50, Cys-37–Cys-78, Cys-60–Cys-86, and Cys-80–Cys-95.

Belongs to the AVIT (prokineticin) family. Expressed by the skin glands.

It localises to the secreted. Its function is as follows. Potent agonist for both PKR1/PROKR1 and PKR2/PROKR2, and inducer of a potent and long-lasting hyperalgesia. Also potentiates capsaicin-induced TRPV1 current, when tested on DRG neurons. At subnanomolar concentrations, this protein both induces potent chemotaxis of macrophages and stimulates LPS-induced production of the pro-inflammatory cytokines IL-1 and IL-12. In vivo, potently stimulates the contraction of the guinea-pig gastrointestinal (GI) smooth muscle (nanomolar concentration). The protein is Prokineticin Bm8-a of Bombina maxima (Giant fire-bellied toad).